A 47-amino-acid polypeptide reads, in one-letter code: Photosystem II reaction center protein K (47 aa).

The propeptide occupies 1 to 10 (MAAFTLDLMA). The helical transmembrane segment at 20–40 (APAVDVLPLIPIFFFLLVFVW) threads the bilayer.

The protein belongs to the PsbK family. PSII is composed of 1 copy each of membrane proteins PsbA, PsbB, PsbC, PsbD, PsbE, PsbF, PsbH, PsbI, PsbJ, PsbK, PsbL, PsbM, PsbT, PsbX, PsbY, Psb30/Ycf12, peripheral proteins PsbO, CyanoQ (PsbQ), PsbU, PsbV and a large number of cofactors. It forms dimeric complexes.

The protein localises to the cellular thylakoid membrane. In terms of biological role, one of the components of the core complex of photosystem II (PSII). PSII is a light-driven water:plastoquinone oxidoreductase that uses light energy to abstract electrons from H(2)O, generating O(2) and a proton gradient subsequently used for ATP formation. It consists of a core antenna complex that captures photons, and an electron transfer chain that converts photonic excitation into a charge separation. The sequence is that of Photosystem II reaction center protein K from Prochlorococcus marinus (strain MIT 9303).